The following is a 700-amino-acid chain: Pentatricopeptide repeat-containing protein 1, mitochondrial (700 aa).

Residues 49–93 (SSSQLPLGQERQENTGSLGSDPSHSNSTATQEEDEEEEESFGTLS) form a disordered region. The segment covering 62 to 78 (NTGSLGSDPSHSNSTAT) has biased composition (polar residues). Over residues 79 to 88 (QEEDEEEEES) the composition is skewed to acidic residues. PPR repeat units follow at residues 135-171 (TPYWYFLQCKHLIKEGKLVEALDLFERQMLKEERLQP), 172-206 (MESNYTVLIGGCGRVGYLKKAFNLYNQMKKRDLEP), 207-245 (SDATYTALFNVCAESPWKDSALQSALKLRQQLQAKNFEL), 246-280 (NLKTYHALLKMAAKCADLRMCLDVFKEIIHKGHVV), 281-317 (TEETFSFLLMGCIQDKKTGFRYALQVWRLMLSLGLQP), and 318-354 (SRDSYNLLLVAARDCGLGDPQVASELLLKPREEATVL). The tract at residues 393-414 (SQALGPPEPPEARVPGKAQPEV) is disordered. PPR repeat units follow at residues 519 to 553 (DLTFFNTLVRKKSKLGDLEGAKALLPVLAKRGLVP), 554 to 585 (NLQTFCNLAIGCHRPKDGLQLLTDMKKSQVTP), and 586 to 620 (NTHIYSALINAAIRKLNYTYLISILKDMKQNRVPV). Residues 672-700 (HPWQKFRTKPQGDQDTGKEADDGCALGGR) form a disordered region. The span at 681-692 (PQGDQDTGKEAD) shows a compositional bias: basic and acidic residues.

This sequence belongs to the PTCD1 family. In terms of assembly, associates with mitochondrial leucine tRNAs. Interacts with ELAC2. In terms of tissue distribution, abundant in testes, skeletal muscle and heart.

Its subcellular location is the mitochondrion. The protein localises to the mitochondrion matrix. In terms of biological role, mitochondrial protein implicated in negative regulation of leucine tRNA levels, as well as negative regulation of mitochondria-encoded proteins and COX activity. Also affects the 3'-processing of mitochondrial tRNAs. The protein is Pentatricopeptide repeat-containing protein 1, mitochondrial (PTCD1) of Homo sapiens (Human).